We begin with the raw amino-acid sequence, 336 residues long: Isopentenyl-diphosphate delta-isomerase (336 aa).

5–6 provides a ligand contact to substrate; that stretch reads RK. FMN is bound by residues 60-62, Ser90, and Asn117; that span reads AMT. Gln147 is a binding site for substrate. Glu148 is a binding site for Mg(2+). FMN is bound by residues Lys179, Ser204, Thr209, 253 to 255, and 274 to 275; these read GVR and SR.

It belongs to the IPP isomerase type 2 family. In terms of assembly, homooctamer. Dimer of tetramers. Requires FMN as cofactor. NADPH serves as cofactor. It depends on Mg(2+) as a cofactor.

Its subcellular location is the cytoplasm. It catalyses the reaction isopentenyl diphosphate = dimethylallyl diphosphate. Its function is as follows. Involved in the biosynthesis of isoprenoids. Catalyzes the 1,3-allylic rearrangement of the homoallylic substrate isopentenyl (IPP) to its allylic isomer, dimethylallyl diphosphate (DMAPP). The protein is Isopentenyl-diphosphate delta-isomerase of Streptococcus pneumoniae (strain ATCC BAA-255 / R6).